Here is a 734-residue protein sequence, read N- to C-terminus: Photosystem I P700 chlorophyll a apoprotein A2 (734 aa).

The next 8 membrane-spanning stretches (helical) occupy residues 46–69 (IFAS…FHVA), 135–158 (LYTG…FHLQ), 175–199 (LDHH…HVAI), 273–291 (IAHH…GHMY), 330–353 (LHFQ…QHMY), 369–395 (AALY…IFFI), 417–439 (AIIS…LYVH), and 517–535 (FLVH…LILV). Residues C559 and C568 each contribute to the [4Fe-4S] cluster site. A run of 2 helical transmembrane segments spans residues 575–596 (AFYL…YWHW) and 643–665 (LSVW…MFLI). Chlorophyll a-binding residues include H654, M662, and Y670. Phylloquinone is bound at residue W671. The chain crosses the membrane as a helical span at residues 707–727 (LVGLAHFSVGYIFTYAAFLIA).

Belongs to the PsaA/PsaB family. As to quaternary structure, the PsaA/B heterodimer binds the P700 chlorophyll special pair and subsequent electron acceptors. PSI consists of a core antenna complex that captures photons, and an electron transfer chain that converts photonic excitation into a charge separation. The eukaryotic PSI reaction center is composed of at least 11 subunits. P700 is a chlorophyll a/chlorophyll a' dimer, A0 is one or more chlorophyll a, A1 is one or both phylloquinones and FX is a shared 4Fe-4S iron-sulfur center. serves as cofactor.

The protein localises to the plastid. The protein resides in the chloroplast thylakoid membrane. The enzyme catalyses reduced [plastocyanin] + hnu + oxidized [2Fe-2S]-[ferredoxin] = oxidized [plastocyanin] + reduced [2Fe-2S]-[ferredoxin]. PsaA and PsaB bind P700, the primary electron donor of photosystem I (PSI), as well as the electron acceptors A0, A1 and FX. PSI is a plastocyanin-ferredoxin oxidoreductase, converting photonic excitation into a charge separation, which transfers an electron from the donor P700 chlorophyll pair to the spectroscopically characterized acceptors A0, A1, FX, FA and FB in turn. Oxidized P700 is reduced on the lumenal side of the thylakoid membrane by plastocyanin. The sequence is that of Photosystem I P700 chlorophyll a apoprotein A2 from Cycas taitungensis (Prince sago).